The chain runs to 418 residues: Homocitrate synthase, mitochondrial (418 aa).

A compositionally biased stretch (polar residues) spans 1-10 (MSVSEANGTE). Residues 1 to 25 (MSVSEANGTETIKPPMNGNPYGPNP) are disordered. The segment covering 14-25 (PPMNGNPYGPNP) has biased composition (low complexity). The 254-residue stretch at 35–288 (FSIIESTLRE…THKYKLNQLR (254 aa)) folds into the Pyruvate carboxyltransferase domain. Residues Arg-43, Glu-44, and His-103 each coordinate 2-oxoglutarate. Residue Glu-44 participates in L-lysine binding. Glu-44 contacts Zn(2+). Residue Asp-123 coordinates L-lysine. Positions 163, 165, 197, 224, and 226 each coordinate 2-oxoglutarate. Thr-197 is a binding site for L-lysine. The Zn(2+) site is built by His-224 and His-226. The active-site Proton acceptor is the His-321.

The protein belongs to the alpha-IPM synthase/homocitrate synthase family. Homocitrate synthase LYS20/LYS21 subfamily. Requires Mg(2+) as cofactor. It depends on Mn(2+) as a cofactor. Zn(2+) serves as cofactor. The cofactor is Co(2+).

The protein localises to the mitochondrion. The catalysed reaction is acetyl-CoA + 2-oxoglutarate + H2O = (2R)-homocitrate + CoA + H(+). Its pathway is amino-acid biosynthesis; L-lysine biosynthesis via AAA pathway; L-alpha-aminoadipate from 2-oxoglutarate: step 1/5. The activity is controled by feedback inhibition by L-lysine, the final product of the pathway that acts as a competitive inhibitor of 2-oxoglutarate. Its function is as follows. Catalyzes the aldol-type condensation of 2-oxoglutarate with acetyl-CoA to yield homocitrate, the first step of the alpha-aminoadipate (AAA) lysine biosynthesis pathway. This chain is Homocitrate synthase, mitochondrial, found in Schizosaccharomyces pombe (strain 972 / ATCC 24843) (Fission yeast).